Here is a 291-residue protein sequence, read N- to C-terminus: tRNA dimethylallyltransferase (291 aa).

Position 11-18 (Gly-11–Ser-18) interacts with ATP. Residue Thr-13 to Ser-18 participates in substrate binding. An interaction with substrate tRNA region spans residues Asp-42–Gln-45.

Belongs to the IPP transferase family. In terms of assembly, monomer. Requires Mg(2+) as cofactor.

The catalysed reaction is adenosine(37) in tRNA + dimethylallyl diphosphate = N(6)-dimethylallyladenosine(37) in tRNA + diphosphate. Catalyzes the transfer of a dimethylallyl group onto the adenine at position 37 in tRNAs that read codons beginning with uridine, leading to the formation of N6-(dimethylallyl)adenosine (i(6)A). This chain is tRNA dimethylallyltransferase, found in Rubrobacter xylanophilus (strain DSM 9941 / JCM 11954 / NBRC 16129 / PRD-1).